A 351-amino-acid polypeptide reads, in one-letter code: Renin receptor (351 aa).

Residues 1–17 (MAVLVVFLSFLVADVFG) form the signal peptide. Topologically, residues 18–303 (NEFSILRSPG…YNLAYKYNFE (286 aa)) are extracellular. The chain crosses the membrane as a helical span at residues 304–324 (YPVVFNLVLWIMIGLALTLIV). Topologically, residues 325 to 351 (TCYNIWNMDPGYDSIIYRMTNQKIRMD) are cytoplasmic. Residues 347-351 (KIRMD) carry the Mediates retrograde transport to the ER motif.

Interacts with renin. Accessory component of the multisubunit proton-transporting vacuolar (V)-ATPase protein pump. Interacts (via N-terminus) with ATP6AP1 (via N-terminus). Interacts with ATP6V0D1; ATP6V0D1 is a V-ATPase complex subunit and the interaction promotes V-ATPase complex assembly. Interacts with TMEM9; TMEM9 is a V-ATPase assembly regulator and the interaction induces the interaction with ATP6V0D1. Interacts with VMA21 (via N-terminus); VMA21 is a V-ATPase accessory component. Phosphorylated. In terms of processing, proteolytically cleaved by a furin-like convertase in the trans-Golgi network to generate N- and C-terminal fragments. As to expression, expressed in the brain.

It is found in the endoplasmic reticulum membrane. The protein resides in the lysosome membrane. The protein localises to the cytoplasmic vesicle. Its subcellular location is the autophagosome membrane. It localises to the cell projection. It is found in the dendritic spine membrane. The protein resides in the axon. The protein localises to the endosome membrane. Its subcellular location is the clathrin-coated vesicle membrane. It localises to the secretory vesicle. It is found in the synaptic vesicle membrane. Functionally, multifunctional protein which functions as a renin, prorenin cellular receptor and is involved in the assembly of the lysosomal proton-transporting V-type ATPase (V-ATPase) and the acidification of the endo-lysosomal system. May mediate renin-dependent cellular responses by activating ERK1 and ERK2. By increasing the catalytic efficiency of renin in AGT/angiotensinogen conversion to angiotensin I, may also play a role in the renin-angiotensin system (RAS). Through its function in V-type ATPase (v-ATPase) assembly and acidification of the lysosome it regulates protein degradation and may control different signaling pathways important for proper brain development, synapse morphology and synaptic transmission. The polypeptide is Renin receptor (ATP6AP2) (Bos taurus (Bovine)).